The primary structure comprises 487 residues: Malonate-semialdehyde dehydrogenase 2 (487 aa).

Positions 154, 178, 181, 182, and 231 each coordinate NAD(+). Cys286 acts as the Nucleophile in catalysis. Residue Glu386 coordinates NAD(+).

Belongs to the aldehyde dehydrogenase family. IolA subfamily. As to quaternary structure, homotetramer.

It catalyses the reaction 3-oxopropanoate + NAD(+) + CoA + H2O = hydrogencarbonate + acetyl-CoA + NADH + H(+). The catalysed reaction is 2-methyl-3-oxopropanoate + NAD(+) + CoA + H2O = propanoyl-CoA + hydrogencarbonate + NADH + H(+). It functions in the pathway polyol metabolism; myo-inositol degradation into acetyl-CoA; acetyl-CoA from myo-inositol: step 7/7. Catalyzes the oxidation of malonate semialdehyde (MSA) and methylmalonate semialdehyde (MMSA) into acetyl-CoA and propanoyl-CoA, respectively. Is involved in a myo-inositol catabolic pathway. Bicarbonate, and not CO2, is the end-product of the enzymatic reaction. The sequence is that of Malonate-semialdehyde dehydrogenase 2 from Bacillus thuringiensis (strain Al Hakam).